The following is a 298-amino-acid chain: Acetylglutamate kinase (298 aa).

Substrate is bound by residues 69–70, Arg-91, and Asn-196; that span reads GG.

The protein belongs to the acetylglutamate kinase family. ArgB subfamily.

It localises to the cytoplasm. The enzyme catalyses N-acetyl-L-glutamate + ATP = N-acetyl-L-glutamyl 5-phosphate + ADP. It functions in the pathway amino-acid biosynthesis; L-arginine biosynthesis; N(2)-acetyl-L-ornithine from L-glutamate: step 2/4. In terms of biological role, catalyzes the ATP-dependent phosphorylation of N-acetyl-L-glutamate. In Nitrobacter hamburgensis (strain DSM 10229 / NCIMB 13809 / X14), this protein is Acetylglutamate kinase.